Consider the following 520-residue polypeptide: 2-isopropylmalate synthase (520 aa).

The Pyruvate carboxyltransferase domain maps to 12 to 274; it reads IRIFDTTLRD…DSAINTPRIV (263 aa). Residues D21, H209, H211, and N245 each coordinate Mn(2+). The tract at residues 396-520 is regulatory domain; that stretch reads RLASMTISDV…VVAGKTAAVA (125 aa).

This sequence belongs to the alpha-IPM synthase/homocitrate synthase family. LeuA type 1 subfamily. In terms of assembly, homodimer. Mn(2+) is required as a cofactor.

Its subcellular location is the cytoplasm. The catalysed reaction is 3-methyl-2-oxobutanoate + acetyl-CoA + H2O = (2S)-2-isopropylmalate + CoA + H(+). It participates in amino-acid biosynthesis; L-leucine biosynthesis; L-leucine from 3-methyl-2-oxobutanoate: step 1/4. In terms of biological role, catalyzes the condensation of the acetyl group of acetyl-CoA with 3-methyl-2-oxobutanoate (2-ketoisovalerate) to form 3-carboxy-3-hydroxy-4-methylpentanoate (2-isopropylmalate). This is 2-isopropylmalate synthase from Xanthomonas axonopodis pv. citri (strain 306).